The chain runs to 146 residues: Hemoglobin subunit beta (146 aa).

Residue Val-1 is modified to N-acetylvaline. The Globin domain occupies 2–146 (HLTAEEKAAV…VANALAHKYH (145 aa)). Thr-12 carries the post-translational modification Phosphothreonine. Ser-44 bears the Phosphoserine mark. Lys-59 carries the post-translational modification N6-acetyllysine. A heme b-binding site is contributed by His-63. Lys-82 carries the post-translational modification N6-acetyllysine. His-92 contacts heme b. Cys-93 bears the S-nitrosocysteine mark. Lys-144 carries the post-translational modification N6-acetyllysine.

This sequence belongs to the globin family. As to quaternary structure, heterotetramer of two alpha chains and two beta chains. As to expression, red blood cells.

Its function is as follows. Involved in oxygen transport from the lung to the various peripheral tissues. The polypeptide is Hemoglobin subunit beta (HBB) (Mellivora capensis (Ratel)).